The sequence spans 148 residues: Putative lysozyme C-2 (148 aa).

A signal peptide spans 1–18 (MKALLVLGFLLLSASVQA). A C-type lysozyme domain is found at 19-148 (KVFKHCELAR…LSGYIRNCGV (130 aa)). Intrachain disulfides connect Cys24-Cys146, Cys48-Cys134, Cys83-Cys99, and Cys95-Cys113. Catalysis depends on residues Glu53 and Asp71.

Belongs to the glycosyl hydrolase 22 family. In terms of assembly, monomer.

The protein localises to the secreted. The catalysed reaction is Hydrolysis of (1-&gt;4)-beta-linkages between N-acetylmuramic acid and N-acetyl-D-glucosamine residues in a peptidoglycan and between N-acetyl-D-glucosamine residues in chitodextrins.. Functionally, lysozymes have primarily a bacteriolytic function; those in tissues and body fluids are associated with the monocyte-macrophage system and enhance the activity of immunoagents. In the intestine they may also have a digestive function. The protein is Putative lysozyme C-2 (Lyz2) of Rattus norvegicus (Rat).